Here is a 211-residue protein sequence, read N- to C-terminus: Superoxide dismutase [Fe] (211 aa).

4 residues coordinate Fe cation: His-34, His-85, Asp-171, and His-175.

This sequence belongs to the iron/manganese superoxide dismutase family. Homotetramer at high temperature; homodimer at room temperature. Fe cation is required as a cofactor.

The protein localises to the cytoplasm. The enzyme catalyses 2 superoxide + 2 H(+) = H2O2 + O2. Functionally, destroys superoxide anion radicals which are normally produced within the cells and which are toxic to biological systems. The chain is Superoxide dismutase [Fe] (sod) from Sulfolobus acidocaldarius (strain ATCC 33909 / DSM 639 / JCM 8929 / NBRC 15157 / NCIMB 11770).